A 51-amino-acid polypeptide reads, in one-letter code: MEIDGRRFAHLDEGRKTGHNVKGGGKFRLLPMAQHQRELVVSGGHEKTNIN.

The chain is Protein alpha-3 (alpha) from Bos taurus (Bovine).